The chain runs to 350 residues: ADP-ribosylhydrolase ARH3 (350 aa).

Residues E27, T57, D58, and D59 each contribute to the Mg(2+) site. A substrate-binding site is contributed by D58. Residues 127-133 (KGSYGNG), H163, L216, and I252 contribute to the substrate site. 3 residues coordinate Mg(2+): D295, D297, and T298.

Belongs to the ADP-ribosylglycohydrolase family. In terms of assembly, monomer. It depends on Mg(2+) as a cofactor.

It localises to the nucleus. The protein localises to the cytoplasm. It is found in the chromosome. The protein resides in the mitochondrion matrix. It catalyses the reaction [(1''-&gt;2')-ADP-alpha-D-ribose](n) + H2O = [(1''-&gt;2')-ADP-alpha-D-ribose](n-1) + ADP-D-ribose. The enzyme catalyses 1''-O-acetyl-ADP-alpha-D-ribose + H2O = ADP-D-ribose + acetate + H(+). It carries out the reaction O-(ADP-D-ribosyl)-L-seryl-[protein] + H2O = ADP-D-ribose + L-seryl-[protein]. The catalysed reaction is alpha-NAD(+) + H2O = ADP-D-ribose + nicotinamide + H(+). Its activity is regulated as follows. The protein undergoes a dramatic conformational switch from closed to open states upon substrate-binding, which enables specific substrate recognition for the 1''-O-linkage. The glutamate flap (Glu-27) blocks substrate entrance to Mg(2+) in the unliganded closed state. In presence of substrate, Glu-27 is ejected from the active site: this closed-to-open transition significantly widens the substrate-binding channel and precisely positions the scissile 1''-O-linkage for cleavage while securing tightly 2'- and 3'-hydroxyls of ADP-ribose. Functionally, ADP-ribosylhydrolase that preferentially hydrolyzes the scissile alpha-O-linkage attached to the anomeric C1'' position of ADP-ribose and acts on different substrates, such as proteins ADP-ribosylated on serine and threonine, free poly(ADP-ribose) and O-acetyl-ADP-D-ribose. Specifically acts as a serine mono-ADP-ribosylhydrolase by mediating the removal of mono-ADP-ribose attached to serine residues on proteins, thereby playing a key role in DNA damage response. Serine ADP-ribosylation of proteins constitutes the primary form of ADP-ribosylation of proteins in response to DNA damage. Does not hydrolyze ADP-ribosyl-arginine, -cysteine, -diphthamide, or -asparagine bonds. Also able to degrade protein free poly(ADP-ribose), which is synthesized in response to DNA damage: free poly(ADP-ribose) acts as a potent cell death signal and its degradation by ADPRHL2 protects cells from poly(ADP-ribose)-dependent cell death, a process named parthanatos. Also hydrolyzes free poly(ADP-ribose) in mitochondria. Specifically digests O-acetyl-ADP-D-ribose, a product of deacetylation reactions catalyzed by sirtuins. Specifically degrades 1''-O-acetyl-ADP-D-ribose isomer, rather than 2''-O-acetyl-ADP-D-ribose or 3''-O-acetyl-ADP-D-ribose isomers. This is ADP-ribosylhydrolase ARH3 (adprs) from Xenopus tropicalis (Western clawed frog).